The primary structure comprises 161 residues: Large ribosomal subunit protein uL30m (161 aa).

The transit peptide at 1–34 (MAGILRLVVQRPPGGLQTVTKGVESLIGTDWIRH) directs the protein to the mitochondrion.

The protein belongs to the universal ribosomal protein uL30 family. As to quaternary structure, component of the mitochondrial ribosome large subunit (39S) which comprises a 16S rRNA and about 50 distinct proteins.

It localises to the mitochondrion. In Macaca fascicularis (Crab-eating macaque), this protein is Large ribosomal subunit protein uL30m (MRPL30).